Consider the following 149-residue polypeptide: Nucleoside diphosphate kinase (149 aa).

K9, F57, R85, T91, R102, and N112 together coordinate ATP. Catalysis depends on H115, which acts as the Pros-phosphohistidine intermediate.

It belongs to the NDK family. As to quaternary structure, homotetramer. Requires Mg(2+) as cofactor.

The protein localises to the cytoplasm. It carries out the reaction a 2'-deoxyribonucleoside 5'-diphosphate + ATP = a 2'-deoxyribonucleoside 5'-triphosphate + ADP. The catalysed reaction is a ribonucleoside 5'-diphosphate + ATP = a ribonucleoside 5'-triphosphate + ADP. In terms of biological role, major role in the synthesis of nucleoside triphosphates other than ATP. The ATP gamma phosphate is transferred to the NDP beta phosphate via a ping-pong mechanism, using a phosphorylated active-site intermediate. The protein is Nucleoside diphosphate kinase of Desulfitobacterium hafniense (strain DSM 10664 / DCB-2).